We begin with the raw amino-acid sequence, 591 residues long: Aspartate--tRNA(Asp/Asn) ligase (591 aa).

Glu-175 is a binding site for L-aspartate. The segment at 199 to 202 (QQFK) is aspartate. 2 residues coordinate L-aspartate: Arg-221 and His-453. An ATP-binding site is contributed by 221-223 (RDE). Glu-486 contacts ATP. Arg-493 serves as a coordination point for L-aspartate. Residue 538–541 (GIDR) participates in ATP binding.

It belongs to the class-II aminoacyl-tRNA synthetase family. Type 1 subfamily. As to quaternary structure, homodimer.

It is found in the cytoplasm. The catalysed reaction is tRNA(Asx) + L-aspartate + ATP = L-aspartyl-tRNA(Asx) + AMP + diphosphate. Its function is as follows. Aspartyl-tRNA synthetase with relaxed tRNA specificity since it is able to aspartylate not only its cognate tRNA(Asp) but also tRNA(Asn). Reaction proceeds in two steps: L-aspartate is first activated by ATP to form Asp-AMP and then transferred to the acceptor end of tRNA(Asp/Asn). The sequence is that of Aspartate--tRNA(Asp/Asn) ligase from Cereibacter sphaeroides (strain KD131 / KCTC 12085) (Rhodobacter sphaeroides).